Consider the following 125-residue polypeptide: Large ribosomal subunit protein uL22 (125 aa).

Belongs to the universal ribosomal protein uL22 family. Part of the 50S ribosomal subunit.

Functionally, this protein binds specifically to 23S rRNA; its binding is stimulated by other ribosomal proteins, e.g. L4, L17, and L20. It is important during the early stages of 50S assembly. It makes multiple contacts with different domains of the 23S rRNA in the assembled 50S subunit and ribosome. Its function is as follows. The globular domain of the protein is located near the polypeptide exit tunnel on the outside of the subunit, while an extended beta-hairpin is found that lines the wall of the exit tunnel in the center of the 70S ribosome. This chain is Large ribosomal subunit protein uL22, found in Erythrobacter litoralis (strain HTCC2594).